A 162-amino-acid chain; its full sequence is Proepiregulin (162 aa).

An N-terminal signal peptide occupies residues 1 to 22 (METLPASWVLTLLCLGSHLLQA). Residues 23–55 (VISTTVIPSCIPGESEDNCTALVQMEDDPRVAQ) constitute a propeptide that is removed on maturation. N-linked (GlcNAc...) asparagine glycosylation occurs at N40. Residues 53–112 (VAQVQITKCSSDMDGYCLHGQCIYLVDMREKFCRCEVGYTGLRCEHFFLTVHQPLSKEYV) lie on the Extracellular side of the membrane. Positions 57 to 97 (QITKCSSDMDGYCLHGQCIYLVDMREKFCRCEVGYTGLRCE) constitute an EGF-like domain. Intrachain disulfides connect C61-C74, C69-C85, and C87-C96. A propeptide spans 102–162 (TVHQPLSKEY…TSGDPVLPQV (61 aa)) (removed in mature form). A helical transmembrane segment spans residues 113–133 (ALTVILIFLFLIITAGCIYYF). The Cytoplasmic segment spans residues 134 to 162 (CRWYKNRKSKKSREEYERVTSGDPVLPQV).

In terms of assembly, interacts with EGFR and ERBB4.

The protein localises to the secreted. The protein resides in the extracellular space. It localises to the cell membrane. Functionally, ligand of the EGF receptor/EGFR and ERBB4. Stimulates EGFR and ERBB4 tyrosine phosphorylation. Contributes to inflammation, wound healing, tissue repair, and oocyte maturation by regulating angiogenesis and vascular remodeling and by stimulating cell proliferation. This is Proepiregulin (Ereg) from Mus musculus (Mouse).